Here is a 137-residue protein sequence, read N- to C-terminus: Sec-independent protein translocase protein TatB (137 aa).

The chain crosses the membrane as a helical span at residues 2-22; it reads FANIGWGEMLILVIAGLVILG. A disordered region spans residues 92 to 137; it reads FFTGKFDQQNGKPAAGQEKPVTPVNPPVTATPPSESTATPFDSDAT. A compositionally biased stretch (low complexity) spans 122–131; that stretch reads TPPSESTATP.

It belongs to the TatB family. As to quaternary structure, the Tat system comprises two distinct complexes: a TatABC complex, containing multiple copies of TatA, TatB and TatC subunits, and a separate TatA complex, containing only TatA subunits. Substrates initially bind to the TatABC complex, which probably triggers association of the separate TatA complex to form the active translocon.

The protein resides in the cell membrane. Part of the twin-arginine translocation (Tat) system that transports large folded proteins containing a characteristic twin-arginine motif in their signal peptide across membranes. Together with TatC, TatB is part of a receptor directly interacting with Tat signal peptides. TatB may form an oligomeric binding site that transiently accommodates folded Tat precursor proteins before their translocation. This is Sec-independent protein translocase protein TatB from Mycobacterium sp. (strain JLS).